Here is a 731-residue protein sequence, read N- to C-terminus: Beta-galactosidase (731 aa).

Residues 1 to 23 form the signal peptide; that stretch reads MGVGIQTMWSILLLFSCIFSAAS. E182 acts as the Proton donor in catalysis. The active-site Nucleophile is the E251. N-linked (GlcNAc...) asparagine glycosylation occurs at N459.

It belongs to the glycosyl hydrolase 35 family.

It localises to the secreted. Its subcellular location is the extracellular space. The protein localises to the apoplast. It catalyses the reaction Hydrolysis of terminal non-reducing beta-D-galactose residues in beta-D-galactosides.. Involved in cell wall degradation. Degrades polysaccharides containing beta-(1--&gt;4)-linked galactans, acting as an exo-(1--&gt;4)-beta-D-galactanase. The chain is Beta-galactosidase from Malus domestica (Apple).